Here is a 421-residue protein sequence, read N- to C-terminus: Probable tRNA N6-adenosine threonylcarbamoyltransferase, mitochondrial (421 aa).

Residues Met-1–Ser-22 constitute a mitochondrion transit peptide. Residues His-133 and His-137 each coordinate a divalent metal cation. Substrate is bound by residues Leu-156–Gly-160, Asp-189, Gly-208, Glu-212, Ala-308–Asn-309, and Thr-336. Asp-337 is a binding site for a divalent metal cation.

It belongs to the KAE1 / TsaD family. Homodimer. A divalent metal cation serves as cofactor.

The protein localises to the mitochondrion. It catalyses the reaction L-threonylcarbamoyladenylate + adenosine(37) in tRNA = N(6)-L-threonylcarbamoyladenosine(37) in tRNA + AMP + H(+). Its function is as follows. Required for the formation of a threonylcarbamoyl group on adenosine at position 37 (t(6)A37) in mitochondrial tRNAs that read codons beginning with adenine. Probably involved in the transfer of the threonylcarbamoyl moiety of threonylcarbamoyl-AMP (TC-AMP) to the N6 group of A37. Involved in mitochondrial genome maintenance. The sequence is that of Probable tRNA N6-adenosine threonylcarbamoyltransferase, mitochondrial from Caenorhabditis elegans.